Reading from the N-terminus, the 657-residue chain is Methyl-accepting chemotaxis protein CtpL (657 aa).

Over 1 to 5 (MRLKQ) the chain is Cytoplasmic. The chain crosses the membrane as a helical span at residues 6-26 (LTNLNTLLLLTVCLALGITLW). Residues 27-305 (WSQRAMERPF…ERQRLQGQVR (279 aa)) lie on the Periplasmic side of the membrane. Residues 306–326 (LIQGGMIALILLIALAIDSLQ) traverse the membrane as a helical segment. An HAMP domain is found at 327 to 380 (RRLARVLGQLVPALSAWADGDFSRPISLRTRTEDLRNLEDSLNRLRSFLAELVG). Topologically, residues 327-657 (RRLARVLGQL…LRTTVQAFRL (331 aa)) are cytoplasmic. Residues 385–621 (RAEQVAGSSQ…EIRSHSERIH (237 aa)) form the Methyl-accepting transducer domain.

Belongs to the methyl-accepting chemotaxis (MCP) protein family.

It is found in the cell inner membrane. Its function is as follows. Chemotactic-signal transducers respond to changes in the concentration of attractants and repellents in the environment, transduce a signal from the outside to the inside of the cell, and facilitate sensory adaptation through the variation of the level of methylation. Chemoreceptor for inorganic phosphate, which is required for taxis at low concentrations of phosphate. Is also responsible for the positive chemotaxis toward 4-chloroaniline (4CA) and catechol. Does not recognize inorganic phosphate directly, but via a complex between the periplasmic protein PstS and inorganic phosphate. The protein is Methyl-accepting chemotaxis protein CtpL of Pseudomonas aeruginosa (strain ATCC 15692 / DSM 22644 / CIP 104116 / JCM 14847 / LMG 12228 / 1C / PRS 101 / PAO1).